Reading from the N-terminus, the 217-residue chain is Large ribosomal subunit protein uL1 (217 aa).

It belongs to the universal ribosomal protein uL1 family.

This Candida glabrata (strain ATCC 2001 / BCRC 20586 / JCM 3761 / NBRC 0622 / NRRL Y-65 / CBS 138) (Yeast) protein is Large ribosomal subunit protein uL1 (RPL10A).